An 84-amino-acid chain; its full sequence is Large ribosomal subunit protein uL23 (84 aa).

This sequence belongs to the universal ribosomal protein uL23 family. Part of the 50S ribosomal subunit. Contacts protein L29.

In terms of biological role, binds to 23S rRNA. One of the proteins that surrounds the polypeptide exit tunnel on the outside of the ribosome. This Halobacterium salinarum (strain ATCC 700922 / JCM 11081 / NRC-1) (Halobacterium halobium) protein is Large ribosomal subunit protein uL23.